A 277-amino-acid chain; its full sequence is NH(3)-dependent NAD(+) synthetase (277 aa).

36–43 provides a ligand contact to ATP; sequence GLSGGIDS. Aspartate 42 provides a ligand contact to Mg(2+). Arginine 118 is a binding site for deamido-NAD(+). Threonine 138 is an ATP binding site. Residue glutamate 143 coordinates Mg(2+). ATP-binding residues include lysine 167 and serine 189.

Belongs to the NAD synthetase family. In terms of assembly, homodimer.

It catalyses the reaction deamido-NAD(+) + NH4(+) + ATP = AMP + diphosphate + NAD(+) + H(+). It participates in cofactor biosynthesis; NAD(+) biosynthesis; NAD(+) from deamido-NAD(+) (ammonia route): step 1/1. Functionally, catalyzes the ATP-dependent amidation of deamido-NAD to form NAD. Uses ammonia as a nitrogen source. The polypeptide is NH(3)-dependent NAD(+) synthetase (Chlorobium phaeovibrioides (strain DSM 265 / 1930) (Prosthecochloris vibrioformis (strain DSM 265))).